The primary structure comprises 104 residues: Thioredoxin (104 aa).

In terms of domain architecture, Thioredoxin spans A2 to L104. An intrachain disulfide couples C29 to C32.

The protein belongs to the thioredoxin family.

Functionally, component of the thioredoxin-thioredoxin reductase system. Participates in various redox reactions through the reversible oxidation of its active center dithiol to a disulfide and catalyzes dithiol-disulfide exchange reactions. This is Thioredoxin (trxA) from Staphylococcus aureus (strain N315).